The chain runs to 987 residues: Centrosomal protein of 120 kDa (987 aa).

The C2 1 domain occupies Met1–Tyr112. The segment at Lys352–Leu408 is disordered. Residues Ser438–Gly567 form the C2 2 domain. Residues Glu670–Tyr919 adopt a coiled-coil conformation. A compositionally biased stretch (basic and acidic residues) spans Arg912–Ala926. The tract at residues Arg912 to Ala937 is disordered. Ser936 is modified (phosphoserine).

This sequence belongs to the CEP120 family. Interacts with TACC2 and TACC3. Interacts with CCDC52.

The protein localises to the cytoplasm. Its subcellular location is the cytoskeleton. It is found in the microtubule organizing center. It localises to the centrosome. Its function is as follows. Plays a role in the microtubule-dependent coupling of the nucleus and the centrosome. Involved in the processes that regulate centrosome-mediated interkinetic nuclear migration (INM) of neural progenitors and for proper positioning of neurons during brain development. Also implicated in the migration and selfrenewal of neural progenitors. May play a role in centriole duplication during mitosis. Required for the recruitment of CEP295 to the proximal end of new-born centrioles at the centriolar microtubule wall during early S phase in a PLK4-dependent manner. The polypeptide is Centrosomal protein of 120 kDa (CEP120) (Bos taurus (Bovine)).